Here is a 486-residue protein sequence, read N- to C-terminus: N-succinylglutamate 5-semialdehyde dehydrogenase (486 aa).

220–225 (GSSRTG) serves as a coordination point for NAD(+). Active-site residues include glutamate 243 and cysteine 277.

This sequence belongs to the aldehyde dehydrogenase family. AstD subfamily.

It carries out the reaction N-succinyl-L-glutamate 5-semialdehyde + NAD(+) + H2O = N-succinyl-L-glutamate + NADH + 2 H(+). It functions in the pathway amino-acid degradation; L-arginine degradation via AST pathway; L-glutamate and succinate from L-arginine: step 4/5. Functionally, catalyzes the NAD-dependent reduction of succinylglutamate semialdehyde into succinylglutamate. The chain is N-succinylglutamate 5-semialdehyde dehydrogenase from Shewanella baltica (strain OS155 / ATCC BAA-1091).